The chain runs to 966 residues: Leucine--tRNA ligase (966 aa).

The 'HIGH' region signature appears at 71–82 (PYPSGAGLHVGH). The disordered stretch occupies residues 561–580 (YSPRTFDPDDADTKPETPLS). Residues 571–580 (ADTKPETPLS) show a composition bias toward basic and acidic residues. The 'KMSKS' region motif lies at 734–738 (KMGKS). ATP is bound at residue Lys737.

Belongs to the class-I aminoacyl-tRNA synthetase family.

Its subcellular location is the cytoplasm. The catalysed reaction is tRNA(Leu) + L-leucine + ATP = L-leucyl-tRNA(Leu) + AMP + diphosphate. The protein is Leucine--tRNA ligase of Streptomyces coelicolor (strain ATCC BAA-471 / A3(2) / M145).